Here is a 351-residue protein sequence, read N- to C-terminus: UDP-N-acetylenolpyruvoylglucosamine reductase (351 aa).

The region spanning 25 to 196 (HIQAQARWLL…AAVEFRLPLL (172 aa)) is the FAD-binding PCMH-type domain. Arg173 is an active-site residue. Ser246 functions as the Proton donor in the catalytic mechanism. The active site involves Glu343.

The protein belongs to the MurB family. FAD is required as a cofactor.

The protein localises to the cytoplasm. The catalysed reaction is UDP-N-acetyl-alpha-D-muramate + NADP(+) = UDP-N-acetyl-3-O-(1-carboxyvinyl)-alpha-D-glucosamine + NADPH + H(+). The protein operates within cell wall biogenesis; peptidoglycan biosynthesis. Cell wall formation. This Xylella fastidiosa (strain 9a5c) protein is UDP-N-acetylenolpyruvoylglucosamine reductase.